Reading from the N-terminus, the 192-residue chain is Ribosome maturation factor RimM (192 aa).

The PRC barrel domain maps to 97 to 172; sequence EDEYYLADLI…VVLADPPALV (76 aa). The tract at residues 168–192 is disordered; the sequence is PPALVGEPEGPESPAEDDDGERHYD.

It belongs to the RimM family. In terms of assembly, binds ribosomal protein uS19.

The protein resides in the cytoplasm. Functionally, an accessory protein needed during the final step in the assembly of 30S ribosomal subunit, possibly for assembly of the head region. Essential for efficient processing of 16S rRNA. May be needed both before and after RbfA during the maturation of 16S rRNA. It has affinity for free ribosomal 30S subunits but not for 70S ribosomes. This Caulobacter sp. (strain K31) protein is Ribosome maturation factor RimM.